We begin with the raw amino-acid sequence, 209 residues long: B3 domain-containing protein At2g31420 (209 aa).

A DNA-binding region (TF-B3) is located at residues 101 to 198 (LSKLEKSDFL…KLCFALSSPT (98 aa)).

It localises to the nucleus. The sequence is that of B3 domain-containing protein At2g31420 from Arabidopsis thaliana (Mouse-ear cress).